We begin with the raw amino-acid sequence, 318 residues long: tRNA uridine(34) hydroxylase (318 aa).

The Rhodanese domain occupies 123–217 (EDDDTVIIDA…YGKDPETKGE (95 aa)). Cysteine 177 serves as the catalytic Cysteine persulfide intermediate.

This sequence belongs to the TrhO family.

The catalysed reaction is uridine(34) in tRNA + AH2 + O2 = 5-hydroxyuridine(34) in tRNA + A + H2O. Catalyzes oxygen-dependent 5-hydroxyuridine (ho5U) modification at position 34 in tRNAs. The chain is tRNA uridine(34) hydroxylase from Staphylococcus aureus (strain MSSA476).